The sequence spans 133 residues: MQDRKFSFRKYFLISVFLIFIVSGITYFYSTQMLEKSQKCVEDNLDAKVKLVDMEDFYFDLNECLNMDDFFIPRPDFLNENLNKNLVVDGLIKNKFLDENFFKDLWIKKENLFNVDIEKENEKLIDKILEISK.

A helical membrane pass occupies residues 11-31 (YFLISVFLIFIVSGITYFYST).

The protein localises to the membrane. This is an uncharacterized protein from Borreliella burgdorferi (strain ATCC 35210 / DSM 4680 / CIP 102532 / B31) (Borrelia burgdorferi).